The sequence spans 244 residues: ATP synthase subunit a, chloroplastic (244 aa).

5 helical membrane passes run 35-55, 92-112, 131-151, 196-216, and 217-237; these read QVLITSWVVIAILLGSAVIAV, VPFIGTMFLFIFVSNWSGALL, INTTVALALLTSVAYFYAGLS, LVVVVLVSLVPSVVPIPVMFL, and GLFISGIQALIFATLAAAYIG.

It belongs to the ATPase A chain family. F-type ATPases have 2 components, CF(1) - the catalytic core - and CF(0) - the membrane proton channel. CF(1) has five subunits: alpha(3), beta(3), gamma(1), delta(1), epsilon(1). CF(0) has four main subunits: a, b, b' and c.

Its subcellular location is the plastid. It is found in the chloroplast thylakoid membrane. Key component of the proton channel; it plays a direct role in the translocation of protons across the membrane. The protein is ATP synthase subunit a, chloroplastic of Gossypium barbadense (Sea Island cotton).